A 282-amino-acid polypeptide reads, in one-letter code: Bifunctional protein FolD (282 aa).

NADP(+) contacts are provided by residues 166-168 (GRS) and Ser191.

Belongs to the tetrahydrofolate dehydrogenase/cyclohydrolase family. As to quaternary structure, homodimer.

The catalysed reaction is (6R)-5,10-methylene-5,6,7,8-tetrahydrofolate + NADP(+) = (6R)-5,10-methenyltetrahydrofolate + NADPH. It catalyses the reaction (6R)-5,10-methenyltetrahydrofolate + H2O = (6R)-10-formyltetrahydrofolate + H(+). The protein operates within one-carbon metabolism; tetrahydrofolate interconversion. Catalyzes the oxidation of 5,10-methylenetetrahydrofolate to 5,10-methenyltetrahydrofolate and then the hydrolysis of 5,10-methenyltetrahydrofolate to 10-formyltetrahydrofolate. This Acidovorax ebreus (strain TPSY) (Diaphorobacter sp. (strain TPSY)) protein is Bifunctional protein FolD.